The chain runs to 758 residues: 5-methyltetrahydropteroyltriglutamate--homocysteine methyltransferase (758 aa).

5-methyltetrahydropteroyltri-L-glutamate-binding positions include 17–20 (RELK) and K117. L-homocysteine-binding positions include 434 to 436 (IGS) and E487. L-methionine contacts are provided by residues 434-436 (IGS) and E487. 5-methyltetrahydropteroyltri-L-glutamate is bound by residues 518–519 (RC) and W564. D602 provides a ligand contact to L-homocysteine. Residue D602 coordinates L-methionine. 5-methyltetrahydropteroyltri-L-glutamate is bound at residue E608. Positions 644, 646, and 668 each coordinate Zn(2+). H697 functions as the Proton donor in the catalytic mechanism. C729 contacts Zn(2+).

Belongs to the vitamin-B12 independent methionine synthase family. Requires Zn(2+) as cofactor.

The enzyme catalyses 5-methyltetrahydropteroyltri-L-glutamate + L-homocysteine = tetrahydropteroyltri-L-glutamate + L-methionine. It participates in amino-acid biosynthesis; L-methionine biosynthesis via de novo pathway; L-methionine from L-homocysteine (MetE route): step 1/1. Functionally, catalyzes the transfer of a methyl group from 5-methyltetrahydrofolate to homocysteine resulting in methionine formation. This Yersinia pestis (strain Pestoides F) protein is 5-methyltetrahydropteroyltriglutamate--homocysteine methyltransferase.